The primary structure comprises 244 residues: DNA repair protein RecO (244 aa).

The protein belongs to the RecO family.

Involved in DNA repair and RecF pathway recombination. This is DNA repair protein RecO from Ehrlichia chaffeensis (strain ATCC CRL-10679 / Arkansas).